The following is a 382-amino-acid chain: MTEHAIKYRLIKKEKHTGARLGEIITPHGTFPTPMFMPVGTQATVKTMSPEELKTLGSGIILSNTYHLWLRPGDELVAEAGGLHKFMNWDQPILTDSGGFQVYSLVQNKKNITEEGVKFKSHLDGRELFLNPEKAISIQNNLGSDIMMSFDECPPFYQPYDYVKASVERTSRWAERGLNAHRRPNDQGLFGIVQGAGFEDLRRQSASDLTSMDFAGYSIGGLAVGESHKEMNAVLDFTTPMLPEDKPRYLMGVGAPDSLIDGVIRGVDMFDCVLPTRIARNGTLMTHFGRVNIRNAKYEYDFTPLDPMCDCYTCTNYTRAYLRHLIKADETFGLRLCSYHNLHFLVNLMKDVRQAIMDDNLLEFREDFCERYGYNQPNAKDF.

Catalysis depends on Asp-96, which acts as the Proton acceptor. Residues 96 to 100, Asp-151, Gln-194, and Gly-221 each bind substrate; that span reads DSGGF. The tract at residues 252-258 is RNA binding; sequence GVGAPDS. The Nucleophile role is filled by Asp-271. An RNA binding; important for wobble base 34 recognition region spans residues 276-280; the sequence is TRIAR. Positions 309, 311, 314, and 340 each coordinate Zn(2+).

It belongs to the queuine tRNA-ribosyltransferase family. As to quaternary structure, homodimer. Within each dimer, one monomer is responsible for RNA recognition and catalysis, while the other monomer binds to the replacement base PreQ1. It depends on Zn(2+) as a cofactor.

The catalysed reaction is 7-aminomethyl-7-carbaguanine + guanosine(34) in tRNA = 7-aminomethyl-7-carbaguanosine(34) in tRNA + guanine. It functions in the pathway tRNA modification; tRNA-queuosine biosynthesis. Catalyzes the base-exchange of a guanine (G) residue with the queuine precursor 7-aminomethyl-7-deazaguanine (PreQ1) at position 34 (anticodon wobble position) in tRNAs with GU(N) anticodons (tRNA-Asp, -Asn, -His and -Tyr). Catalysis occurs through a double-displacement mechanism. The nucleophile active site attacks the C1' of nucleotide 34 to detach the guanine base from the RNA, forming a covalent enzyme-RNA intermediate. The proton acceptor active site deprotonates the incoming PreQ1, allowing a nucleophilic attack on the C1' of the ribose to form the product. After dissociation, two additional enzymatic reactions on the tRNA convert PreQ1 to queuine (Q), resulting in the hypermodified nucleoside queuosine (7-(((4,5-cis-dihydroxy-2-cyclopenten-1-yl)amino)methyl)-7-deazaguanosine). The sequence is that of Queuine tRNA-ribosyltransferase from Lactococcus lactis subsp. cremoris (strain MG1363).